We begin with the raw amino-acid sequence, 828 residues long: MNLSRRDFMKTNAAVAAAAVAGLAIPVKNVEASPDKIIKWDKAPCRFCGTGCSVLVGTQNGRVVASQGDPDADVNRGLNCIKGYFLPKIMYGKDRLTSPMLRMTNGKFDKHGEFTPVSWDQAFTIMAEKFKKALKEKGPNGAGMFTSGQSTIFEGIAKSKLFKAGLRSNNIDPNARHCMASAAVAFMRTFGMDEPMGCYDDIEKADAFVLWGSNMAEMHPILWSRISDRRLSHPDVKVAVLSTFEHRSFELADLGVIFTPQSDLAIMNYIANYLIQHDAIDHDFIQKHTKFKRGETDIGYGLRETHELEKAAKNVKTAGKMHDSDFEEYKKLVAPYTLEKAHEISGVPKEQLEALAKMYADPKLNIVSFWTMGFNQHTRGVWANHLIYNIHLLTGKISKPGCGPFSLTGQPSACGTAREVGTFAHRLPADLVVTNPKHVEKAEKLWKLPKGVIQTQVGYHAVAQDRALKDKKMNVLWQMCTNNMQGGPNINQERFPGWRDEENFVIVSDPYPTVSALAADLILPTAMWVEKEGAYGNAERRTQFWYQQVKAPGESKSDVWQLVEFSKYFTTDEMWPAEVLAANPEYKGKTLYEVLFRNGQVDKFQVPTDKPGYMNDEAEHFGFYLQKGLFEEYAVFGRGHGHDLADFETYHKARGLRWPVVDGKETLWRYREGYDPYVKEGEGVAFYGYPDKKAIILAVPYEPPAEAPNAEYDLWLTTGRVLEHWHTGTMTRRVPELHRSFPNNLVWMHPLDAKKRGLRHGDKVKISSRRGEMISHLDTRGRNKVPQGLVYTTFFDAGQLANYLTLDATDPISKETDFKKCAVKVEKA.

The tat-type signal signal peptide spans 1-32; sequence MNLSRRDFMKTNAAVAAAAVAGLAIPVKNVEA. A 4Fe-4S Mo/W bis-MGD-type domain is found at 38–94; it reads IKWDKAPCRFCGTGCSVLVGTQNGRVVASQGDPDADVNRGLNCIKGYFLPKIMYGKD. [4Fe-4S] cluster-binding residues include Cys45, Cys48, Cys52, and Cys80. Mo-bis(molybdopterin guanine dinucleotide) is bound by residues Lys82, Gln149, Asn174, Cys178, 211 to 218, 242 to 246, 261 to 263, Met372, Gln376, Asn482, 508 to 509, Lys531, Asp558, and 718 to 727; these read WGSNMAEM, STFEH, QSD, SD, and TGRVLEHWHT. Residue Phe794 coordinates substrate. Mo-bis(molybdopterin guanine dinucleotide)-binding residues include Asn802 and Lys819.

This sequence belongs to the prokaryotic molybdopterin-containing oxidoreductase family. NasA/NapA/NarB subfamily. In terms of assembly, component of the periplasmic nitrate reductase NapAB complex composed of NapA and NapB. Requires [4Fe-4S] cluster as cofactor. Mo-bis(molybdopterin guanine dinucleotide) is required as a cofactor. In terms of processing, predicted to be exported by the Tat system. The position of the signal peptide cleavage has not been experimentally proven.

The protein localises to the periplasm. It carries out the reaction 2 Fe(II)-[cytochrome] + nitrate + 2 H(+) = 2 Fe(III)-[cytochrome] + nitrite + H2O. Functionally, catalytic subunit of the periplasmic nitrate reductase complex NapAB. Receives electrons from NapB and catalyzes the reduction of nitrate to nitrite. This chain is Periplasmic nitrate reductase, found in Pasteurella multocida (strain Pm70).